The sequence spans 469 residues: 6-phospho-beta-galactosidase (469 aa).

Residues glutamine 18, histidine 115, asparagine 158, glutamate 159, and asparagine 296 each coordinate D-galactose 6-phosphate. The active-site Proton donor is glutamate 159. Glutamate 374 serves as the catalytic Nucleophile. Positions 429, 430, 436, and 438 each coordinate D-galactose 6-phosphate.

Belongs to the glycosyl hydrolase 1 family.

The catalysed reaction is a 6-phospho-beta-D-galactoside + H2O = D-galactose 6-phosphate + an alcohol. Its pathway is carbohydrate metabolism; lactose degradation; D-galactose 6-phosphate and beta-D-glucose from lactose 6-phosphate: step 1/1. The protein is 6-phospho-beta-galactosidase of Staphylococcus haemolyticus (strain JCSC1435).